Reading from the N-terminus, the 120-residue chain is Large ribosomal subunit protein uL18 (120 aa).

This sequence belongs to the universal ribosomal protein uL18 family. In terms of assembly, part of the 50S ribosomal subunit; part of the 5S rRNA/L5/L18/L25 subcomplex. Contacts the 5S and 23S rRNAs.

In terms of biological role, this is one of the proteins that bind and probably mediate the attachment of the 5S RNA into the large ribosomal subunit, where it forms part of the central protuberance. The polypeptide is Large ribosomal subunit protein uL18 (Geobacillus kaustophilus (strain HTA426)).